The following is a 436-amino-acid chain: Chromosomal replication initiator protein DnaA (436 aa).

The domain I, interacts with DnaA modulators stretch occupies residues 1-69 (MLADEVLELL…AHLFEVKTGT (69 aa)). Positions 69–99 (TKPNVEITTQTKLKSSKQNQVNIKQIKAQST) are domain II. The interval 100–314 (LLNPAYTFEN…SAIINLNAYA (215 aa)) is domain III, AAA+ region. ATP is bound by residues G144, G146, K147, and T148. The tract at residues 315–436 (NLMRQEITLD…ELKNKILTKG (122 aa)) is domain IV, binds dsDNA.

This sequence belongs to the DnaA family. As to quaternary structure, oligomerizes as a right-handed, spiral filament on DNA at oriC.

Its subcellular location is the cytoplasm. Its function is as follows. Plays an essential role in the initiation and regulation of chromosomal replication. ATP-DnaA binds to the origin of replication (oriC) to initiate formation of the DNA replication initiation complex once per cell cycle. Binds the DnaA box (a 9 base pair repeat at the origin) and separates the double-stranded (ds)DNA. Forms a right-handed helical filament on oriC DNA; dsDNA binds to the exterior of the filament while single-stranded (ss)DNA is stabiized in the filament's interior. The ATP-DnaA-oriC complex binds and stabilizes one strand of the AT-rich DNA unwinding element (DUE), permitting loading of DNA polymerase. After initiation quickly degrades to an ADP-DnaA complex that is not apt for DNA replication. Binds acidic phospholipids. In Campylobacter curvus (strain 525.92), this protein is Chromosomal replication initiator protein DnaA.